We begin with the raw amino-acid sequence, 62 residues long: Photosystem II reaction center protein Z (62 aa).

The next 2 helical transmembrane spans lie at 8-28 (AVFA…VVFA) and 41-61 (FSGT…NSLI).

The protein belongs to the PsbZ family. PSII is composed of 1 copy each of membrane proteins PsbA, PsbB, PsbC, PsbD, PsbE, PsbF, PsbH, PsbI, PsbJ, PsbK, PsbL, PsbM, PsbT, PsbY, PsbZ, Psb30/Ycf12, at least 3 peripheral proteins of the oxygen-evolving complex and a large number of cofactors. It forms dimeric complexes.

It localises to the plastid. The protein localises to the chloroplast thylakoid membrane. In terms of biological role, may control the interaction of photosystem II (PSII) cores with the light-harvesting antenna, regulates electron flow through the 2 photosystem reaction centers. PSII is a light-driven water plastoquinone oxidoreductase, using light energy to abstract electrons from H(2)O, generating a proton gradient subsequently used for ATP formation. The protein is Photosystem II reaction center protein Z of Calycanthus floridus var. glaucus (Eastern sweetshrub).